The primary structure comprises 246 residues: Ribonuclease PH (246 aa).

The interval 67-87 is disordered; the sequence is NMLPGSTSPRKRRDRSGKVDG. Residues Arg88 and 126 to 128 contribute to the phosphate site; that span reads GTR.

The protein belongs to the RNase PH family. As to quaternary structure, homohexameric ring arranged as a trimer of dimers.

The enzyme catalyses tRNA(n+1) + phosphate = tRNA(n) + a ribonucleoside 5'-diphosphate. In terms of biological role, phosphorolytic 3'-5' exoribonuclease that plays an important role in tRNA 3'-end maturation. Removes nucleotide residues following the 3'-CCA terminus of tRNAs; can also add nucleotides to the ends of RNA molecules by using nucleoside diphosphates as substrates, but this may not be physiologically important. Probably plays a role in initiation of 16S rRNA degradation (leading to ribosome degradation) during starvation. The polypeptide is Ribonuclease PH (Rhodopirellula baltica (strain DSM 10527 / NCIMB 13988 / SH1)).